We begin with the raw amino-acid sequence, 100 residues long: Elevenin (100 aa).

Residues 1–24 form the signal peptide; that stretch reads MALSQKALLVLVLSMLLTASDSWA. An intrachain disulfide couples C29 to C38. The propeptide occupies 44–100; the sequence is KRGGDSLSVGGSAELDDTLTDPFLKSEEPKEWRELTRLSRVLQTFLSHPTGEMEQHD.

The protein belongs to the elevenin family. Monomer. Expressed by the venom duct.

Its subcellular location is the secreted. In terms of biological role, may mimic the function of prey elevenin neuropeptide. In vivo, intracranial injection in mice induces hyperactivity. The protein is Elevenin of Conus ammiralis (Admiral cone).